The primary structure comprises 246 residues: 33kDa venom protein (246 aa).

The N-terminal stretch at 1–20 (MAGKEVIFIMALFIAVESSP) is a signal peptide. 7 tandem repeats follow at residues 83–96 (GGAV…KRET), 97–110 (AESL…EKAS), 111–124 (AENL…QKSS), 125–138 (VDEK…QKGA), 139–152 (VEGQ…RRET), 153–166 (AESQ…EKAS), and 167–180 (AENL…QKVT). The 12 X approximate tandem repeats of [AV][DE]X[VL]SGSX[DE]QX[KR]X[ST] stretch occupies residues 83–243 (GGAVSESVKQ…SGSVGNDDDI (161 aa)). The disordered stretch occupies residues 88–246 (ESVKQKRETA…VGNDDDISVQ (159 aa)). The span at 112 to 123 (ENLSGSFDQQKS) shows a compositional bias: polar residues. Over residues 175 to 186 (DKQKVTVEEKSE) the composition is skewed to basic and acidic residues. One copy of the 8; half-length repeat lies at 181 to 187 (VEEKSEP). Tandem repeats lie at residues 188–201 (AQGQ…KRKT), 202–215 (TENV…EKAS), 216–229 (AESL…QKSS), and 230–243 (VDEK…DDDI). Residues 217 to 228 (ESLSGSFDQQKS) show a composition bias toward polar residues.

As to expression, expressed by the venom gland.

The protein resides in the secreted. This chain is 33kDa venom protein, found in Chelonus sp. nr. curvimaculatus (Parasitic wasp).